We begin with the raw amino-acid sequence, 289 residues long: Protease HtpX (289 aa).

The next 2 membrane-spanning stretches (helical) occupy residues 7 to 27 and 38 to 58; these read LFLLTNLAITFVLGIVLNIIF and GGILVMSLVFGFAGSLISLFM. H144 provides a ligand contact to Zn(2+). The active site involves E145. H148 is a Zn(2+) binding site. 2 helical membrane-spanning segments follow: residues 155 to 175 and 194 to 214; these read VTMTLLQGVLNTFVIFLSRII and LVFWIVDIALQMIFGVIATMI. E223 serves as a coordination point for Zn(2+).

Belongs to the peptidase M48B family. It depends on Zn(2+) as a cofactor.

It is found in the cell inner membrane. The protein is Protease HtpX of Actinobacillus pleuropneumoniae serotype 5b (strain L20).